The sequence spans 512 residues: MMNAAFQQTATDSKTGDAPAILEMRGISQIFPGVKALDNVSIALHPGTVTALIGENGAGKSTLVKILTGIYRPNEGEILVDGQPVTFASAQAAIDAGVTAIHQETVLFDELTVAENIFLGHAPRTRLRTIDWQAMNSRAKALLTALESNIDPTIRLKDFSIAQRHLVAIARALSIEARIVIMDEPTAALSRKEIDDLFRIVRGLKEKGKAILFISHKFDEVYEIADDFVVFRDGRAVGQGRLKETPQDEIVRMMVGRDVENAFPKVDVAFGGPVLEIRNYSHRTEFRDISFTLRQGEILGIYGLIGAGRSELSQSLFGITRPLSGKMMLEGREITIHSPQDAIRAGIVYVPEERGRHGLALPMPIFQNMTLPSLTRTSRRGFLRAAEEFALARKYAERLDLRAAALSVPVGTLSGGNQQKVVIGKWLATAPKVIILDEPTKGIDIGSKAAVHGFISELAAEGLSIIMVSSELPEIIGMSDRVLVMKEGLAAGIFERAELSPEALVRAATGNA.

2 consecutive ABC transporter domains span residues 22–258 (LEMR…VGRD) and 263–512 (FPKV…TGNA). 54–61 (GENGAGKS) provides a ligand contact to ATP.

The protein belongs to the ABC transporter superfamily. Ribose importer (TC 3.A.1.2.1) family. In terms of assembly, the complex is composed of an ATP-binding protein (RbsA), two transmembrane proteins (RbsC) and a solute-binding protein (RbsB).

It localises to the cell inner membrane. The enzyme catalyses D-ribose(out) + ATP + H2O = D-ribose(in) + ADP + phosphate + H(+). In terms of biological role, part of the ABC transporter complex RbsABC involved in ribose import. Responsible for energy coupling to the transport system. In Rhizobium johnstonii (strain DSM 114642 / LMG 32736 / 3841) (Rhizobium leguminosarum bv. viciae), this protein is Ribose import ATP-binding protein RbsA 2.